We begin with the raw amino-acid sequence, 133 residues long: Large ribosomal subunit protein uL15 (133 aa).

A disordered region spans residues 1 to 62; sequence MALHNLQPAP…GQQPLQRRLP (62 aa). Residues 32 to 45 show a composition bias toward polar residues; sequence TRGQKGQKSRTGYS.

Belongs to the universal ribosomal protein uL15 family. Part of the 50S ribosomal subunit.

Binds to the 23S rRNA. This chain is Large ribosomal subunit protein uL15, found in Nitratiruptor sp. (strain SB155-2).